The following is a 382-amino-acid chain: 1-deoxy-D-xylulose 5-phosphate reductoisomerase (382 aa).

NADPH contacts are provided by Thr10, Gly11, Ser12, Ile13, Asn38, and Asn120. Lys121 provides a ligand contact to 1-deoxy-D-xylulose 5-phosphate. Glu122 serves as a coordination point for NADPH. Asp146 is a Mn(2+) binding site. Residues Ser147, Glu148, Ser172, and His195 each contribute to the 1-deoxy-D-xylulose 5-phosphate site. Glu148 lines the Mn(2+) pocket. Gly201 provides a ligand contact to NADPH. Positions 208, 213, 214, and 217 each coordinate 1-deoxy-D-xylulose 5-phosphate. Glu217 lines the Mn(2+) pocket.

The protein belongs to the DXR family. The cofactor is Mg(2+). Requires Mn(2+) as cofactor.

The catalysed reaction is 2-C-methyl-D-erythritol 4-phosphate + NADP(+) = 1-deoxy-D-xylulose 5-phosphate + NADPH + H(+). It participates in isoprenoid biosynthesis; isopentenyl diphosphate biosynthesis via DXP pathway; isopentenyl diphosphate from 1-deoxy-D-xylulose 5-phosphate: step 1/6. Its function is as follows. Catalyzes the NADPH-dependent rearrangement and reduction of 1-deoxy-D-xylulose-5-phosphate (DXP) to 2-C-methyl-D-erythritol 4-phosphate (MEP). The sequence is that of 1-deoxy-D-xylulose 5-phosphate reductoisomerase from Thermoanaerobacter sp. (strain X514).